Reading from the N-terminus, the 340-residue chain is Cytochrome P450 monooxygenase cheG (340 aa).

An N-linked (GlcNAc...) asparagine glycan is attached at asparagine 25. Residues 37–57 form a helical membrane-spanning segment; the sequence is MLLGIPTVILSLTPAVLRLLI. Cysteine 283 is a heme binding site. The disordered stretch occupies residues 308–340; the sequence is LPPGQGKPEKGSMPNGSMSPDTKAKVLFRSRKL. Residue asparagine 322 is glycosylated (N-linked (GlcNAc...) asparagine).

The protein belongs to the cytochrome P450 family. It depends on heme as a cofactor.

The protein resides in the membrane. Its pathway is secondary metabolite biosynthesis. In terms of biological role, cytochrome P450 monooxygenase; part of the gene cluster that mediates the biosynthesis of chaetoglobosin A which has a unique inhibitory activity against actin polymerization in mammalian cells. Chaetoglobosin A and its intermediates are involved in the morphological differentiation of C.globosum. The first step of the pathway is the synthesis of prochaetoglobosin I via condensation of one acetyl-CoA, 8 malonyl-CoA, and a L-tryptophan molecule by the PKS-NRPS hybrid synthetase cheA, followed by reduction of backbone double bond to install desired geometry by the enoyl reductase cheB. Further multiple oxidation steps performed by the cytochrome P450 monooxygenases cheE and cheG, as well as by the FAD-linked oxidoreductase cheF, lead to the formation of chaetoglobosin A. Depending on the order of action of these reductases, distinct intermediates can be identified. Within the pathway, the cytochrome P450 monooxygenase cheE catalyzes a stereospecific epoxidation on prochaetoglobosin I, cytoglobosin D, and chaetoglobosin J intermediates. The FAD-linked oxidoreductase cheF performs dehydrogenation of the C-20 hydroxyl groups in the 20-dihyrochaetoglobosin A and cytoglobosin D intermediates. Finally, the cytochrome P450 monooxygenase cheG can catalyze the stereospecific dihydroxylation of prochaetoglobosin I and prochaetoglobosin IV at C-19 and C-20, respectively. The Diels-Alderase cheD may play a role in the post-PKS-NRPS biosynthetic steps catalyzing Diels-Alder cyclization. The chain is Cytochrome P450 monooxygenase cheG from Chaetomium globosum (strain ATCC 6205 / CBS 148.51 / DSM 1962 / NBRC 6347 / NRRL 1970) (Soil fungus).